Reading from the N-terminus, the 379-residue chain is Succinyl-diaminopimelate desuccinylase (379 aa).

His70 is a binding site for Zn(2+). The active site involves Asp72. Residue Asp103 participates in Zn(2+) binding. Residue Glu137 is the Proton acceptor of the active site. Glu138, Glu166, and His352 together coordinate Zn(2+).

The protein belongs to the peptidase M20A family. DapE subfamily. Homodimer. Requires Zn(2+) as cofactor. The cofactor is Co(2+).

It carries out the reaction N-succinyl-(2S,6S)-2,6-diaminopimelate + H2O = (2S,6S)-2,6-diaminopimelate + succinate. The protein operates within amino-acid biosynthesis; L-lysine biosynthesis via DAP pathway; LL-2,6-diaminopimelate from (S)-tetrahydrodipicolinate (succinylase route): step 3/3. Its function is as follows. Catalyzes the hydrolysis of N-succinyl-L,L-diaminopimelic acid (SDAP), forming succinate and LL-2,6-diaminopimelate (DAP), an intermediate involved in the bacterial biosynthesis of lysine and meso-diaminopimelic acid, an essential component of bacterial cell walls. This is Succinyl-diaminopimelate desuccinylase from Shewanella baltica (strain OS195).